Consider the following 156-residue polypeptide: Small ribosomal subunit protein uS7 (156 aa).

The protein belongs to the universal ribosomal protein uS7 family. In terms of assembly, part of the 30S ribosomal subunit. Contacts proteins S9 and S11.

One of the primary rRNA binding proteins, it binds directly to 16S rRNA where it nucleates assembly of the head domain of the 30S subunit. Is located at the subunit interface close to the decoding center, probably blocks exit of the E-site tRNA. This Neisseria meningitidis serogroup C (strain 053442) protein is Small ribosomal subunit protein uS7.